The chain runs to 87 residues: Transcriptional regulator PINT87aa (87 aa).

In terms of assembly, interacts with PAF1 complex member PAF1. Interacts with transcription factor FOXM1. Expressed in brain, liver, kidney and stomach with lower levels in breast, intestine, thyroid and pancreas.

The protein resides in the nucleus. In terms of biological role, enhances the binding of the PAF1 complex to target gene promoters and plays a role in negative regulation of transcription. May function as an anchor to keep the PAF1 complex on target gene promoters, sequentially pausing RNA polymerase II-induced mRNA elongation. Inhibits FOXM1-mediated transcription of PHB2. The polypeptide is Transcriptional regulator PINT87aa (Homo sapiens (Human)).